A 389-amino-acid chain; its full sequence is 2-aminoethylphosphonate--pyruvate transaminase 1 (389 aa).

The residue at position 196 (lysine 196) is an N6-(pyridoxal phosphate)lysine.

The protein belongs to the class-V pyridoxal-phosphate-dependent aminotransferase family. PhnW subfamily. Homodimer. Pyridoxal 5'-phosphate serves as cofactor.

It carries out the reaction (2-aminoethyl)phosphonate + pyruvate = phosphonoacetaldehyde + L-alanine. In terms of biological role, involved in phosphonate degradation. This Paraburkholderia xenovorans (strain LB400) protein is 2-aminoethylphosphonate--pyruvate transaminase 1.